Here is a 410-residue protein sequence, read N- to C-terminus: Arginine deiminase (410 aa).

Cys-399 serves as the catalytic Amidino-cysteine intermediate.

It belongs to the arginine deiminase family.

The protein resides in the cytoplasm. It catalyses the reaction L-arginine + H2O = L-citrulline + NH4(+). It participates in amino-acid degradation; L-arginine degradation via ADI pathway; carbamoyl phosphate from L-arginine: step 1/2. The sequence is that of Arginine deiminase from Treponema denticola (strain ATCC 35405 / DSM 14222 / CIP 103919 / JCM 8153 / KCTC 15104).